The following is a 248-amino-acid chain: MPPVLILLTLLLPLRAGAEEIIGGNEISPHSRPYMAYYEFLKVGGKKMFCGGFLVRDKFVLTAAHCKGSSMTVTLGAHNIKAKEETQQIIPVAKAIPHPDYNPDDRSNDIMLLKLVRNAKRTRAVRPLNLPRRNAHVKPGDECYVAGWGKVTPDGEFPKTLHEVKLTVQKDQVCESQFQSSYNRANEICVGDSKIKGASFEEDSGGPLVCKRAAAGIVSYGQTDGSAPQVFTRVLSFVSWIKKTMKHS.

Positions 1-18 are cleaved as a signal peptide; sequence MPPVLILLTLLLPLRAGA. Residues 19-20 constitute a propeptide that is removed on maturation; the sequence is EE. The Peptidase S1 domain occupies 21–246; the sequence is IIGGNEISPH…FVSWIKKTMK (226 aa). Cysteines 50 and 66 form a disulfide. Catalysis depends on charge relay system residues His65 and Asp109. Cystine bridges form between Cys143–Cys210 and Cys174–Cys189. Ser204 (charge relay system) is an active-site residue.

Belongs to the peptidase S1 family. Granzyme subfamily.

The protein localises to the cytolytic granule. Its function is as follows. This enzyme is probably necessary for target cell lysis in cell-mediated immune responses. The chain is Granzyme C (Gzmc) from Mus musculus (Mouse).